We begin with the raw amino-acid sequence, 4004 residues long: MPQRNEPIAVIGSACQFPGHSTTPSKLWELLREPRDLLQTIPSDRFNAESWYHADSAHHGTSNVTKSYFLAEDPKAFDSQFFNIPPKECEAIDPQQRLLMETVYDSLCAAGLSMESLRGSSTACYVGQMCDDWSGIMMRDWDSLPQYTATGISRSIMSNRVSYFFDWHGPSMTIDTACSSSLVAVHEAVQTLRSGDSNVAVACGANLILSPGMYIAESKLKMLSPDGRSRMWDEGANGYARGEGIAAVVLKTLSQALADGDHIECIVRETGFNQDGRTTGITMPSNVAQAALIRDTYKKAGLDPFNPKDRPQFFHAHGTGTPAGDPQEAEAISRAFFKDGEKADNKLYVGSIKTIIGHTEGTAGLASLIGTSLAMQHRTVPPNMHFTKLADRVAPFYTNLEVPTAAKPWPAAPAGQPLRASVNSFGFGGANAHAILESYEPEVHSAPAAGALPLFTPITFSANSEKSLQAMLASYSDFLKTNEPINVRDVAWTHQTRLSALAFRTAVAGQTAAEIVNSIDAALEKKENLGIRASGVEKPSILGVFTGQGAQWPTMGAALIKASPYARDTIAAMDRSLQELPEADRPSWSIRAELEAPKESSRLAEAALSQPLCTAVQVVLVDLIKAAGIKFKAVVGHSSGEIGAAYAAGLVSASDAIRIAYYRGVYAKLAGSKSGAKGAMMAVGTSLEDAREFCELEEFEGRLTVAASNAASSVTLSGDEDAIDQAEEIFKDESKFARKLRVDTAYHSFHMIPCSEPYKKALDGCGVEIGDVTSTTWFSSVVPGTKMSKETLGSQYWVDNMKNTVLFSQAITAAVKEAGPFDLAIEVGPHPALKGPCLNNIEDASGNAETPYTGLLSRGGDDVNAFSAALGFIWERFGASAVDFDAYDKLVSGSSEPKSLAVDLPRYPWDHDRTYWFESRVSAGYKYREEPPHPILGVKSIEGTTGPQVQWRNILTQREVSWMPGHKLQGQTVFPAAGYVSMAIEAVMTLAGENSVQLIELSDFVIGRAISFFDESAAQEVMFTLNVTKNTEEAISATFEVTSCPQGERQMSHNANGTISITLGIPSPDTLAAVPVQQFNMVDVEVDRFYKALSDMGYHYSPPFKAMSNIRRRVDAAVGEMTDVRGDHWEDNLLLHPGLLDTSFQAIFAAFSSPGDERLWSIHVPTIIKRMTFNPAVASFPPGEETVWPWQAAITSGPHQTLRADIEVFAENGEDVLFEVEGISMVPFSNATAENDCHLFSNFVYDIDGPSGELAGPNHPTDFDVKLATDSERFSFYWMRTLLETITPEEEEQTLIHYKRMLKWCRFVFDQVKNGEHPHVKPEALNDTLDVVEKLVEQYGQRADIDLIRAVGEDLPMKIRTNGNIVETMVRDGMLDAFYEEGLGLHIANNWEANMAVQLTHRYPRMNVLEIGGGTGGSTRIILPRLGQNFSSYTFTDVSAGFFEAAEERFKEFADRMIFKTLDMEKDITEQGFQEGHYDMILASNVLHVGADLDATMSNVRRLLKPGGWLINMETVTFYPCLRNGFAMAGLSGWWIGADTGRPWGPTIDIAEWDKVYKRTGFSGVDTYAPNFDSLHPFSVMAAQAVDERVQFLRQPLETEPADAKKEELVVIGGQTEEVSEIVDRVVELLTPRFSSVTRVESVDAFADGSATVPTCVLNLSELDVPVMQELMDDQPDKFEALKEIFSSARDILWVTKGSRAENPHARMIVNMARAIRKEIPSVNFQNLDVEVLDEGSADLFAATMLRHQALHRWEKELLPGSFRWSKEPEMHLENGKIYIPRLKSVKEMNDRYNSTKRQITHEVNAKDARIELVGTKDSYELREPSPLKPALDAEGKVIVKVSKSLLQSVKVPTAGYYFLCYGTTESGESVIAFSDSSESVVAVPQNWTIPQPPKVDASKALLSVAANILADLVITVAPAQGTLLAHDPDPIVAAALSKQAATKRIRVFFTTTQADKKGPNWIYIHPHSPRRLLKKTLPKGVSLFINLSGREDSKLMKEISEYLPAGCTLSDQSPFFSNTVESRPAANPELVAKYLSTGWAKAKATSFAIPGTKTVLPLKDVPGHPGKAEQLSVVDWEADAVVPVSVQPIDTGDNLFKPDRTYFMVGLSGEVGQSITQWMVRHGARYVVLTSRNPKVNSEWIETLEDEYNAVIKTMSLDVTDQSSLHACYDKISRTMPPIAGVAHGAMVLIDSLFQNMDYEDLMTVLRPKILGAMYLDELFSEDTLDFFILFSSITGTVGNTGQSNYIGANAFMEALGLQRRRRGLAASILGISSLVGIGYVERAENFDAEYFAKSGYRNISEQDLHMLFAEAIVRGRPESKENHEIITGIVPTYADKDSKAGYLQDIKFSHLALERSQARNDGDDSASVPVRIQLQTAVTKDEVVEIMQAGFVARIKKVLRIPAEDEFSLTASLVEQGVDSLVAVEVRSWFLKEVDVDMPVLKVLGGASIADLLNDALDRLAPEIVPNLGADPSSVSRPPVAPAPVPSVSRPASNAPPVLNKQLPLPSSAAELKAEREREAEAKRKREEERRAAELARKAAEEAKRAEELRKARERRESREQQKADVLKKARDALIKSEITEPMSFGQSRFWFLDQVLRDRTTFNMAISVRLEGRIRAEDMKKAVQAVVLRHEALRTRYFTTGEHGDAPMQGIIPDPSFVPFMHKRIKTEGEAQKELDAVRAHVWDMNSWAGIRVHLLSMPSDRAHFLIIGCHHIAMDGVSLNIFYADLEKAYKGKSLPALPLASQYRAFARQQRLDYAAGKMDADLAFYRAMIPEPQTVKPLPLFPFARVRDRVPLETYAEVSATARIDATLTSAIRAAARELRATTFHFYLAALQVLVFKLLEKKDPGCRDFFLGIADANRTDAKFMGTLGFFLNLLPLRCERGEDSAPFGDVVKAARAKAYAALERSRLPFDVLLERLDALPRSAAHAPLFQVFVDYRQGVQERQRYMGVKAAGEDWYTARTGYDVSLDVIENAAGDSRLEFKLQEALYDAEGARLLMQAYVHVLRQCAERPGREWGAVEVWPREVVERAVSVGRVPSPKYEWPATVGHQIDEIIKRHTASLAIKDGRGNVLTYAQMDDRVNSIAAALIENGAADGGRVGVFQNPTADWICSVVAIFRAGAVYIPLDLRNPLKRLASIVEAARPAAILAHSETWDKVEALGGTDSKAINVSALPDSHQPVANRAKTDGPAVILFTSGSTGTPKGMHMSHANLVKHMEVWTKQATLPEGATKLVLQQSAYTFDKSLEQILTPITMGGALYVVPAEQRGDPVSITDIIVSEGVTYTDATPSEYLMWFRYAGETLKKAKSWMFAVTAGEAVTESLLAEFRKLDLPVTLVNNYGPAEATLDATLEELPYRTMKPGDQISAGYPLPGYSVYIVDEDLKPVPIGCPGEVILAGVGIVGGYLNKPELTAQKFVPDVFANNGGIMYRTGDRGRLSDKGQLLYEGRIEGDTQIKLRGVRMELEDVEASIMSTANGALSRAVVSLRGEEGSEFLVAHVVFAPNFTVDQAVFINRLPTTLPLPQYMVPALFAVVDTLPLTPHLKVDRKAVKSLAIPDQAPKAPTTTANLTPTESRLAAIWQQMIPGAPAALSPDTEFFHIGGNSLLLVKLQALIRQTFGAQLRLIDVMDAASLAGMARAIDDATGGAQQQSPTTATTIDWAAEAAVPGDLATKIHLPASTASTPPKKSTDLTIVLTGATGLLGRNLLKHLAADPRVKRIYAVAVRPSPSSSAAPVSRIPLLSDKLVTKSGDLTLPLLGLSPADAAALAAEADVFVHVAANRSFWDAYASLRAANVGAVKDIVALAAARRVPVHFVSSGEVGKYSALTPPPGDGSDGYVASKWAAERFLENAAAEMAGLQVIVHRPLKPDGAEARPAPEDVLGELVWLAKGLGRRPVLEGLAGSLGVVPIVDVVEGVAQALFGAGDGLEREGELKVMRHVATMNVDIGAFAESVAADGELMELEGMDALTWTGEAKKAGWSMFMVSQEIVMAKGGEVVVSKR.

The 434-residue stretch at 5–438 (NEPIAVIGSA…GANAHAILES (434 aa)) folds into the Ketosynthase family 3 (KS3) domain. Catalysis depends on for beta-ketoacyl synthase activity residues cysteine 178, histidine 317, and histidine 358. The Malonyl-CoA:ACP transacylase (MAT) domain occupies 544-867 (VFTGQGAQWP…RGGDDVNAFS (324 aa)). Positions 933–1066 (HPILGVKSIE…GTISITLGIP (134 aa)) are N-terminal hotdog fold. The tract at residues 933 to 1233 (HPILGVKSIE…SMVPFSNATA (301 aa)) is dehydratase (DH) domain. The region spanning 933-1234 (HPILGVKSIE…MVPFSNATAE (302 aa)) is the PKS/mFAS DH domain. Histidine 966 (proton acceptor; for dehydratase activity) is an active-site residue. Residues 1081–1234 (MVDVEVDRFY…MVPFSNATAE (154 aa)) form a C-terminal hotdog fold region. Aspartate 1141 functions as the Proton donor; for dehydratase activity in the catalytic mechanism. The interval 1289–1575 (EEEEQTLIHY…DTYAPNFDSL (287 aa)) is methyltransferase (MT) domain. In terms of domain architecture, Ketoreductase (KR) spans 2102–2272 (TYFMVGLSGE…RRGLAASILG (171 aa)). Residues 2384-2462 (EVVEIMQAGF…DLLNDALDRL (79 aa)) enclose the Carrier 1 domain. At serine 2422 the chain carries O-(pantetheine 4'-phosphoryl)serine. The segment at 2471 to 2540 (GADPSSVSRP…ERRAAELARK (70 aa)) is disordered. Residues 2488 to 2500 (PSVSRPASNAPPV) show a composition bias toward low complexity. Positions 2514–2540 (LKAEREREAEAKRKREEERRAAELARK) are enriched in basic and acidic residues. The tract at residues 2584–3019 (PMSFGQSRFW…RQCAERPGRE (436 aa)) is condensation (C) domain. The tract at residues 3060–3459 (KRHTASLAIK…GRIEGDTQIK (400 aa)) is adenylation (A) (KR) domain. One can recognise a Carrier 2 domain in the interval 3570 to 3647 (ANLTPTESRL…GMARAIDDAT (78 aa)). Position 3607 is an O-(pantetheine 4'-phosphoryl)serine (serine 3607). Residues 3694 to 3924 (LTIVLTGATG…VVEGVAQALF (231 aa)) form a reductase (RED) domain region.

This sequence in the C-terminal section; belongs to the NRP synthetase family. Pantetheine 4'-phosphate is required as a cofactor.

Its pathway is secondary metabolite biosynthesis. Hybrid PKS-NRPS synthetase; part of the gene cluster that mediates the biosynthesis of macrophasetins, 3-decalinoyltetramic acids (DTAs) which feature a tetramate (pyrrolidine-2,4-dione) unit connected to a decalin fragment and that have potent bioactivities. The PKS-NRPS mpsA together with its associated enoylreductase partner mpsG incorporate one unit of acetyl-CoA, seven units of malonyl-CoA, and one unit of L-alanine to assemble the linear tetramic acid intermediate corresponding to the backbone of macrophasetins. Without the Diels-Alderase mpsD, the mpsA/G product can undergo the non-enzymatic intramolecular Diels-Alder (IMDA) reaction to generate both macrophasetin A and macrophasetin B. Catalyzed by mpsD, the linear tetramic acid intermediate is thoroughly converted to macrophasetin A via the endo-IMDA reaction in a regioselective and stereoselective manner. Finally, the cytochrome P450 monooxygenase mpsF catalyzes the hydroxylation at C20 to yield the end product macrophasetin C. In Macrophomina phaseolina (strain MS6) (Charcoal rot fungus), this protein is Hybrid PKS-NRPS synthetase mpsA.